A 359-amino-acid polypeptide reads, in one-letter code: UPF0283 membrane protein Rleg2_1967 (359 aa).

The segment at 1 to 43 is disordered; it reads MSKPPSDPPRRPPAAFTYEDEATERHDNGRQAERRRKPESFSE. A compositionally biased stretch (basic and acidic residues) spans 23 to 40; the sequence is TERHDNGRQAERRRKPES. The next 2 membrane-spanning stretches (helical) occupy residues 77–97 and 111–131; these read FGKI…GLWT and LGYL…ALVI.

This sequence belongs to the UPF0283 family.

The protein localises to the cell inner membrane. In Rhizobium leguminosarum bv. trifolii (strain WSM2304), this protein is UPF0283 membrane protein Rleg2_1967.